The chain runs to 218 residues: ATP phosphoribosyltransferase (218 aa).

It belongs to the ATP phosphoribosyltransferase family. Short subfamily. Heteromultimer composed of HisG and HisZ subunits.

It localises to the cytoplasm. It catalyses the reaction 1-(5-phospho-beta-D-ribosyl)-ATP + diphosphate = 5-phospho-alpha-D-ribose 1-diphosphate + ATP. It functions in the pathway amino-acid biosynthesis; L-histidine biosynthesis; L-histidine from 5-phospho-alpha-D-ribose 1-diphosphate: step 1/9. Functionally, catalyzes the condensation of ATP and 5-phosphoribose 1-diphosphate to form N'-(5'-phosphoribosyl)-ATP (PR-ATP). Has a crucial role in the pathway because the rate of histidine biosynthesis seems to be controlled primarily by regulation of HisG enzymatic activity. This chain is ATP phosphoribosyltransferase, found in Burkholderia mallei (strain ATCC 23344).